Consider the following 506-residue polypeptide: ESX-5 secretion system ATPase EccB5 (506 aa).

Residues 56–76 form a helical membrane-spanning segment; sequence VVASVSAALVICLGALLWSFI.

It belongs to the EccB family. In terms of assembly, part of the ESX-5 / type VII secretion system (T7SS), which is composed of cytosolic and membrane components. The ESX-5 membrane complex is composed of EccB5, EccC5, EccD5 and EccE5.

Its subcellular location is the cell inner membrane. An ATPase. Part of the ESX-5 specialized secretion system, which is responsible for the secretion of EsxN and a number of PE_PGRS and PPE proteins, including PPE41. This Mycobacterium tuberculosis (strain CDC 1551 / Oshkosh) protein is ESX-5 secretion system ATPase EccB5.